Consider the following 194-residue polypeptide: NADPH-flavin oxidoreductase (194 aa).

It belongs to the non-flavoprotein flavin reductase family. As to quaternary structure, homodimer. It can form an isobutylamine N-hydroxylase two component enzyme system formed of a flavin reductase component (VlmR) and a monooxygenase component (VlmH).

It carries out the reaction FADH2 + NADP(+) = FAD + NADPH + 2 H(+). The catalysed reaction is FMNH2 + NADP(+) = FMN + NADPH + 2 H(+). Its function is as follows. Involved in the biosynthesis of the azoxy antibiotic valanimycin, which has an antitumor activity. Catalyzes the reduction of FAD/FMN to FADH(2)/FMNH(2) which are subsequently used for the hydroxylation of isobutylamine by the isobutylamine N-hydroxylase VlmH. It can reduce either FAD or flavin mononucleotide (FMN) but prefers FAD. The enzyme has a strong preference for NADPH as acceptor. The chain is NADPH-flavin oxidoreductase from Streptomyces viridifaciens.